A 419-amino-acid chain; its full sequence is Acetyltransferase fsoF (419 aa).

A glycan (N-linked (GlcNAc...) asparagine) is linked at asparagine 2. 2 helical membrane-spanning segments follow: residues 4-24 (TIIS…VVGF) and 62-82 (AFLG…AILS). The tract at residues 89–114 (QSPTSSLGGLIPPTTRDTPKTQNNAT) is disordered. N-linked (GlcNAc...) asparagine glycosylation is found at asparagine 112 and asparagine 169. 4 consecutive transmembrane segments (helical) span residues 230–250 (YWAI…VVAV), 314–334 (YVFM…SDVS), 337–357 (IPLG…GIML), and 386–406 (VSGP…WIYM).

It belongs to the wax synthase family.

It is found in the membrane. The enzyme catalyses 3-O-(beta-D-glucopyranosyl)-2alpha-hydroxyisomotiol + acetyl-CoA = 3-O-(beta-D-glucopyranosyl)-2alpha-acetoxyisomotiol + CoA. It carries out the reaction 2-deacetylfuscoatroside + acetyl-CoA = fuscoatroside + CoA. It participates in secondary metabolite biosynthesis; terpenoid biosynthesis. Its function is as follows. Terpene cyclase-glycosyl transferase fusion protein; part of the gene cluster that mediates the biosynthesis of the enfumafungin-type antibiotic, fuscoatroside. Within the pathway, fsoF catalyzes the acetylation of C2-alpha-OH following the C2 hydroxylation by the cytochrome monooxygenase fsoD. The fuscoatroside biosynthesis is initiated by the cyclization of 2,3(S)-oxidosqualene through FsoA's terpene cyclase (TC) domain, leading to the formation of the fernane skeleton isomotiol, harboring a fernane triterpene skeleton with a C8-C9 double bond. Subsequently, C2-alpha-hydroxylation mediated by fsoD results in the production of 2-alpha-hydroxy-isomotiol, which is further acetylated by fsoF. The glycosyltransferase (GT) domain of FsoA may convert isomotiol, 2-alpha-hydroxy-isomotiol, and the acetylated derivative of 2-alpha-hydroxy-isomotiol into their corresponding glycosides 3-O-(beta-D-glucopyranosyl)-isomotiol, 3-O-(beta-D-glucopyranosyl)-2-alpha-hydroxy-isomotiol, and 3-O-(beta-D-glucopyranosyl)-2-alpha-acetoxy-isomotiol, which then undergo oxidative cleavage under the action of fsoE to form s 2-deacetoxy-fuscoatroside, 2-deacetyl-fuscoatroside, and fuscoatroside, respectively. Although hydroxylation followed by acetylation of 3-O-(beta-D-glucopyranosyl)-isomotiol and 2-deacetoxy-fuscoatroside by fsoD and fsoF could not be ruled out, this process is likely to occur with difficulty due to bulky steric hindrance caused by the presence of a glycan at C3 in these compounds. Interestingly, fsoE can also utilize the aglycones isomotiol and 2-alpha-hydroxy-isomotiol as substrates to generate 19-beta-hydroxy-isomotiol and 2-alpha,19-beta-dihydroxy-isomotiol, respectively. These reactions occur with lower efficiency. Finally, fsoE can further convert 2-alpha,19-beta-dihydroxy-isomotiol into 2-alpha-hydroxy-ismotiol-19-one and 2-alpha-hydroxy-ismotiol-19-one into 2-deacetyl-3-deglucopyranosyl-fuscoatroside. The polypeptide is Acetyltransferase fsoF (Humicola fuscoatra).